The following is a 1025-amino-acid chain: MKFFALFIYRPVATILLSVAITLCGILGFRMLPVAPLPQVDFPVIMVSASLPGASPETMASSVATPLERSLGRIAGVSEMTSSSSLGSTRIILQFDFDRDINGAARDVQAAINAAQSLLPSGMPSRPTYRKANPSDAPIMILTLTSDTYSQGELYDFASTQLAPTISQIDGVGDVDVGGSSLPAVRVGLNPQALFNQGVSLDDVRTAISNANVRKPQGALEDGTHRWQIQTNDELKTAAEYQPLIIHYNNGGAVRLGDVATVTDSVQDVRNAGMTNAKPAILLMIRKLPEANIIQTVDSIRAKLPELQETIPAAIDLQIAQDRSPTIRASLEEVEQTLIISVALVILVVFLFLRSGRATIIPAVSVPVSLIGTFAAMYLCGFSLNNLSLMALTIATGFVVDDAIVVLENIARHLEAGMKPLQAALQGTREVGFTVLSMSLSLVAVFLPLLLMGGLPGRLLREFAVTLSVAIGISLLVSLTLTPMMCGWMLKASKPREQKRLRGFGRMLVALQQGYGKSLKWVLNHTRLVGVVLLGTIALNIWLYISIPKTFFPEQDTGVLMGGIQADQSISFQAMRGKLQDFMKIIRDDPAVDNVTGFTGGSRVNSGMMFITLKPRDERSETAQQIIDRLRVKLAKEPGANLFLMAVQDIRVGGRQSNASYQYTLLSDDLAALREWEPKIRKKLATLPELADVNSDQQDNGAEMNLVYDRDTMARLGIDVQAANSLLNNAFGQRQISTIYQPMNQYKVVMEVDPRYTQDISALEKMFVINNEGKAIPLSYFAKWQPANAPLSVNHQGLSAASTISFNLPTGKSLSDASAAIDRAMTQLGVPSTVRGSFAGTAQVFQETMNSQVILIIAAIATVYIVLGILYESYVHPLTILSTLPSAGVGALLALELFNAPFSLIALIGIMLLIGIVKKNAIMMVDFALEAQRHGNLTPQEAIFQACLLRFRPIMMTTLAALFGALPLVLSGGDGSELRHPLGITIVGGLVMSQLLTLYTTPVVYLFFDRLRLRFSRKPKQTVTE.

The next 12 helical transmembrane spans lie at 3-23, 333-353, 360-380, 387-407, 431-451, 463-483, 528-548, 853-873, 875-895, 897-917, 953-973, and 984-1004; these read FFAL…AITL, EVEQ…FLFL, IIPA…MYLC, LSLM…IVVL, VGFT…PLLL, FAVT…TLTP, LVGV…ISIP, VILI…LYES, VHPL…LLAL, LFNA…IGIV, PIMM…LSGG, and ITIV…TPVV.

Belongs to the resistance-nodulation-cell division (RND) (TC 2.A.6) family. MdtC subfamily. In terms of assembly, part of a tripartite efflux system composed of MdtA, MdtB and MdtC. MdtC forms a heteromultimer with MdtB.

It localises to the cell inner membrane. This Shigella sonnei (strain Ss046) protein is Multidrug resistance protein MdtC.